The primary structure comprises 1325 residues: Lysine-specific demethylase 3A (1325 aa).

Disordered regions lie at residues 249 to 284 (SKRIGGVKRKPSENSGSVDAKHTKSSPEVSQSQGHV), 300 to 333 (PANKDQRHQGLPLPANSPPNLGAETPQGTCRRSV), and 372 to 399 (QNGKYTSLISSRSSSLSDSTNGKETGLK). Over residues 274 to 283 (SPEVSQSQGH) the composition is skewed to polar residues. The span at 378–390 (SLISSRSSSLSDS) shows a compositional bias: low complexity. The segment at 669–694 (CDVCDTTIFNLRWVCSKCGFGVCVDC) adopts a C6-type zinc-finger fold. 2 disordered regions span residues 772 to 791 (TLKEDSKQNLVPGERTSLQQ) and 798 to 819 (PQLPTHEPPVKPAAGSKQTASV). The LXXLL motif signature appears at 888–892 (LRNLL). Residues 1062-1285 (MPSRFDDLMK…HCFWLTQEFR (224 aa)) form the JmjC domain. Fe cation is bound by residues His-1124, Asp-1126, and His-1253.

It belongs to the JHDM2 histone demethylase family. Fe(2+) is required as a cofactor.

Its subcellular location is the cytoplasm. The protein resides in the nucleus. The enzyme catalyses N(6),N(6)-dimethyl-L-lysyl(9)-[histone H3] + 2 2-oxoglutarate + 2 O2 = L-lysyl(9)-[histone H3] + 2 formaldehyde + 2 succinate + 2 CO2. Histone demethylase that specifically demethylates 'Lys-9' of histone H3, thereby playing a central role in histone code. Preferentially demethylates mono- and dimethylated H3 'Lys-9' residue, with a preference for dimethylated residue, while it has weak or no activity on trimethylated H3 'Lys-9'. Demethylation of Lys residue generates formaldehyde and succinate. The chain is Lysine-specific demethylase 3A (KDM3A) from Gallus gallus (Chicken).